We begin with the raw amino-acid sequence, 152 residues long: Deoxyuridine 5'-triphosphate nucleotidohydrolase (152 aa).

Substrate is bound by residues 72-74 (RSG), Asn85, 89-91 (TID), and Lys99.

This sequence belongs to the dUTPase family. The cofactor is Mg(2+).

It catalyses the reaction dUTP + H2O = dUMP + diphosphate + H(+). The protein operates within pyrimidine metabolism; dUMP biosynthesis; dUMP from dCTP (dUTP route): step 2/2. Functionally, this enzyme is involved in nucleotide metabolism: it produces dUMP, the immediate precursor of thymidine nucleotides and it decreases the intracellular concentration of dUTP so that uracil cannot be incorporated into DNA. The polypeptide is Deoxyuridine 5'-triphosphate nucleotidohydrolase (Bradyrhizobium diazoefficiens (strain JCM 10833 / BCRC 13528 / IAM 13628 / NBRC 14792 / USDA 110)).